Reading from the N-terminus, the 230-residue chain is Orotidine 5'-phosphate decarboxylase (230 aa).

Substrate is bound by residues aspartate 8, lysine 30, 59 to 68 (DLKLYDIPNT), threonine 118, arginine 178, glutamine 187, glycine 207, and arginine 208. Catalysis depends on lysine 61, which acts as the Proton donor.

Belongs to the OMP decarboxylase family. Type 1 subfamily. As to quaternary structure, homodimer.

It carries out the reaction orotidine 5'-phosphate + H(+) = UMP + CO2. The protein operates within pyrimidine metabolism; UMP biosynthesis via de novo pathway; UMP from orotate: step 2/2. Catalyzes the decarboxylation of orotidine 5'-monophosphate (OMP) to uridine 5'-monophosphate (UMP). The chain is Orotidine 5'-phosphate decarboxylase from Sulfurovum sp. (strain NBC37-1).